The sequence spans 155 residues: SsrA-binding protein (155 aa).

The protein belongs to the SmpB family.

It is found in the cytoplasm. Functionally, required for rescue of stalled ribosomes mediated by trans-translation. Binds to transfer-messenger RNA (tmRNA), required for stable association of tmRNA with ribosomes. tmRNA and SmpB together mimic tRNA shape, replacing the anticodon stem-loop with SmpB. tmRNA is encoded by the ssrA gene; the 2 termini fold to resemble tRNA(Ala) and it encodes a 'tag peptide', a short internal open reading frame. During trans-translation Ala-aminoacylated tmRNA acts like a tRNA, entering the A-site of stalled ribosomes, displacing the stalled mRNA. The ribosome then switches to translate the ORF on the tmRNA; the nascent peptide is terminated with the 'tag peptide' encoded by the tmRNA and targeted for degradation. The ribosome is freed to recommence translation, which seems to be the essential function of trans-translation. This chain is SsrA-binding protein, found in Helicobacter hepaticus (strain ATCC 51449 / 3B1).